Consider the following 315-residue polypeptide: Protoheme IX farnesyltransferase (315 aa).

Helical transmembrane passes span Val-34 to Asn-54, Pro-55 to Ile-75, Ala-105 to Asn-125, Leu-127 to Leu-147, Ile-155 to Gly-175, Leu-177 to Trp-197, Trp-226 to His-246, Leu-251 to Leu-271, and Tyr-294 to Met-314.

The protein belongs to the UbiA prenyltransferase family. Protoheme IX farnesyltransferase subfamily.

It is found in the cell inner membrane. The catalysed reaction is heme b + (2E,6E)-farnesyl diphosphate + H2O = Fe(II)-heme o + diphosphate. It functions in the pathway porphyrin-containing compound metabolism; heme O biosynthesis; heme O from protoheme: step 1/1. Its function is as follows. Converts heme B (protoheme IX) to heme O by substitution of the vinyl group on carbon 2 of heme B porphyrin ring with a hydroxyethyl farnesyl side group. In Gluconacetobacter diazotrophicus (strain ATCC 49037 / DSM 5601 / CCUG 37298 / CIP 103539 / LMG 7603 / PAl5), this protein is Protoheme IX farnesyltransferase.